Consider the following 132-residue polypeptide: Fluoride-specific ion channel FluC (132 aa).

Transmembrane regions (helical) follow at residues 5–25, 36–56, 68–88, and 103–123; these read LVAI…LGMW, GTLA…ALFA, FVVT…AEMF, and IAVH…TFGA. Na(+) contacts are provided by glycine 75 and threonine 78.

Belongs to the fluoride channel Fluc/FEX (TC 1.A.43) family.

It is found in the cell inner membrane. It catalyses the reaction fluoride(in) = fluoride(out). With respect to regulation, na(+) is not transported, but it plays an essential structural role and its presence is essential for fluoride channel function. Functionally, fluoride-specific ion channel. Important for reducing fluoride concentration in the cell, thus reducing its toxicity. The polypeptide is Fluoride-specific ion channel FluC (Chromohalobacter salexigens (strain ATCC BAA-138 / DSM 3043 / CIP 106854 / NCIMB 13768 / 1H11)).